Reading from the N-terminus, the 82-residue chain is Zinc finger CCCH domain-containing protein 13 (82 aa).

2 consecutive C3H1-type zinc fingers follow at residues 9–37 and 55–82; these read RPGE…HPKN and RPGQ…DHFT.

This chain is Zinc finger CCCH domain-containing protein 13, found in Arabidopsis thaliana (Mouse-ear cress).